Consider the following 209-residue polypeptide: Redox-sensing transcriptional repressor Rex (209 aa).

Positions 16–55 form a DNA-binding region, H-T-H motif; it reads LYYRFIQNLSLSGKQRVSSAELSEAVKVDSATIRRDFSYF. An NAD(+)-binding site is contributed by 90-95; sequence GVGNLG.

Belongs to the transcriptional regulatory Rex family. As to quaternary structure, homodimer.

It localises to the cytoplasm. Modulates transcription in response to changes in cellular NADH/NAD(+) redox state. The chain is Redox-sensing transcriptional repressor Rex from Bacillus anthracis (strain A0248).